The primary structure comprises 87 residues: MEWKLFADLAEVAGSRTVRVDVDGDATVGDALDALVGAHPALESRVFGDDGELYDHINVLRNGEAAALGEATAAGDELALFPPVSGG.

Gly87 is subject to 1-thioglycine; alternate. Glycyl adenylate; alternate is present on Gly87. Gly87 participates in a covalent cross-link: Glycyl lysine isopeptide (Gly-Lys) (interchain with K-? in acceptor proteins); alternate.

In terms of processing, the C-terminal glycine is likely acyl-adenylated (-COAMP) by UbaA, and also probably thiocarboxylated (-COSH) to function in sulfur transfer.

Functions as a protein modifier covalently attached to lysine residues of substrate proteins, as well as a sulfur carrier in molybdenum cofactor (MoCo) biosynthesis. The protein modification process is termed sampylation and involves the formation of an isopeptide bond between the SAMP1 C-terminal glycine carboxylate and the epsilon-amino group of lysine residues on target proteins. May serve as a proteolytic signal in the cell to target proteins for degradation by proteasomes. This chain is Small archaeal modifier protein 1 (samp1), found in Haloferax volcanii (strain ATCC 29605 / DSM 3757 / JCM 8879 / NBRC 14742 / NCIMB 2012 / VKM B-1768 / DS2) (Halobacterium volcanii).